The primary structure comprises 564 residues: Serine/threonine-protein kinase PknA (564 aa).

A Protein kinase domain is found at 9-271 (YRVIKTLGSG…TAREMLEALQ (263 aa)). ATP-binding positions include 15–23 (LGSGGFGET) and Lys40. Asp139 functions as the Proton acceptor in the catalytic mechanism. Residues 360–406 (QPVTQTTSLPSETTISNNDTPTVEPSPTDTPETPISQTVTQDPTPQA) show a composition bias toward polar residues. The segment at 360–458 (QPVTQTTSLP…PVEATDRPSP (99 aa)) is disordered. The span at 428–445 (TTEPTTSVPQPTTPSEPQ) shows a compositional bias: low complexity.

The protein belongs to the protein kinase superfamily. Ser/Thr protein kinase family.

It catalyses the reaction L-seryl-[protein] + ATP = O-phospho-L-seryl-[protein] + ADP + H(+). It carries out the reaction L-threonyl-[protein] + ATP = O-phospho-L-threonyl-[protein] + ADP + H(+). Functionally, probably required for both normal cellular growth and differentiation. Inactivation of pknA leads to colonies that appear light green and rough in the absence of combined nitrogen. This is Serine/threonine-protein kinase PknA (pknA) from Nostoc sp. (strain PCC 7120 / SAG 25.82 / UTEX 2576).